We begin with the raw amino-acid sequence, 274 residues long: Indole-3-glycerol phosphate synthase (274 aa).

The protein belongs to the TrpC family.

It carries out the reaction 1-(2-carboxyphenylamino)-1-deoxy-D-ribulose 5-phosphate + H(+) = (1S,2R)-1-C-(indol-3-yl)glycerol 3-phosphate + CO2 + H2O. Its pathway is amino-acid biosynthesis; L-tryptophan biosynthesis; L-tryptophan from chorismate: step 4/5. The sequence is that of Indole-3-glycerol phosphate synthase from Kineococcus radiotolerans (strain ATCC BAA-149 / DSM 14245 / SRS30216).